Reading from the N-terminus, the 526-residue chain is Light-independent protochlorophyllide reductase subunit B (526 aa).

A [4Fe-4S] cluster-binding site is contributed by D36. Residue D290 is the Proton donor of the active site. Substrate is bound at residue 425 to 426 (GL).

The protein belongs to the ChlB/BchB/BchZ family. In terms of assembly, protochlorophyllide reductase is composed of three subunits; ChlL, ChlN and ChlB. Forms a heterotetramer of two ChlB and two ChlN subunits. [4Fe-4S] cluster is required as a cofactor.

The catalysed reaction is chlorophyllide a + oxidized 2[4Fe-4S]-[ferredoxin] + 2 ADP + 2 phosphate = protochlorophyllide a + reduced 2[4Fe-4S]-[ferredoxin] + 2 ATP + 2 H2O. Its pathway is porphyrin-containing compound metabolism; chlorophyll biosynthesis (light-independent). Its function is as follows. Component of the dark-operative protochlorophyllide reductase (DPOR) that uses Mg-ATP and reduced ferredoxin to reduce ring D of protochlorophyllide (Pchlide) to form chlorophyllide a (Chlide). This reaction is light-independent. The NB-protein (ChlN-ChlB) is the catalytic component of the complex. This Prochlorococcus marinus (strain MIT 9515) protein is Light-independent protochlorophyllide reductase subunit B.